The sequence spans 517 residues: Phosphatase and actin regulator 3 (517 aa).

The disordered stretch occupies residues 1–24 (MDQTPPARSEPLVSGIRTPPVRRN). Thr29 carries the post-translational modification Phosphothreonine. Disordered stretches follow at residues 41–247 (KKKN…RPLP) and 260–320 (ATKH…SEEN). An RPEL 1 repeat occupies 52–77 (SALEKKMAGRQGREELIKQGLLEMME). A compositionally biased stretch (basic and acidic residues) spans 54–68 (LEKKMAGRQGREELI). 2 stretches are compositionally biased toward polar residues: residues 92–129 (QPAQ…QDEL) and 157–172 (LPTT…SGSL). Residues 187–198 (PSPPLLPTPPPK) are compositionally biased toward pro residues. Phosphoserine is present on Ser188. Thr194 is subject to Phosphothreonine. Residues 260-300 (ATKHRQDSFQGRECRGSPKKRMDVRLSRTSSMERGKERDEA) show a composition bias toward basic and acidic residues. RPEL repeat units follow at residues 359-384 (ELLA…PRRT), 397-422 (MKLS…KQRN), and 435-460 (QRLT…IRFS). Positions 408 to 444 (AVEELERRNILKQRNDQTEQEERREIKQRLTRKLNQR) form a coiled coil.

The protein belongs to the phosphatase and actin regulator family. Binds actin and PPP1CA; thus inhibiting the protein phosphatase 1 (PP1) activity. As to expression, diffusely expressed throughout the brain cortex, with highest levels in the cortex and the hippocampus and lower levels in the striatum and thalamus.

It localises to the nucleus matrix. The protein is Phosphatase and actin regulator 3 (Phactr3) of Rattus norvegicus (Rat).